The primary structure comprises 600 residues: Elongation factor 4 (600 aa).

Residues 5–187 enclose the tr-type G domain; the sequence is KYIRNFSIIA…AIINKLPSPK (183 aa). Residues 17 to 22 and 134 to 137 each bind GTP; these read DHGKST and NKID.

The protein belongs to the TRAFAC class translation factor GTPase superfamily. Classic translation factor GTPase family. LepA subfamily.

It localises to the cell inner membrane. It carries out the reaction GTP + H2O = GDP + phosphate + H(+). Functionally, required for accurate and efficient protein synthesis under certain stress conditions. May act as a fidelity factor of the translation reaction, by catalyzing a one-codon backward translocation of tRNAs on improperly translocated ribosomes. Back-translocation proceeds from a post-translocation (POST) complex to a pre-translocation (PRE) complex, thus giving elongation factor G a second chance to translocate the tRNAs correctly. Binds to ribosomes in a GTP-dependent manner. In Rickettsia typhi (strain ATCC VR-144 / Wilmington), this protein is Elongation factor 4.